Here is a 433-residue protein sequence, read N- to C-terminus: CinA-like protein (433 aa).

Belongs to the CinA family.

The sequence is that of CinA-like protein from Prochlorococcus marinus subsp. pastoris (strain CCMP1986 / NIES-2087 / MED4).